A 528-amino-acid polypeptide reads, in one-letter code: MDAKALWQRYQEWLYFHEGLGLYLDVSRMRFDDAFVKSLLPKFDKAFADMAELEKGAIANPDENRMVGHYWLRNPDLAPTPEIAQEIVQTLEQIEAFAEKIQTGAIHPPKANRFTDIISIGIGGSALGPQFVAEALAPEFPPLKIHFIDNTDPAGIDKILTHLRNNLASTLVLVISKSGGTPEPRNGMIEVKKAYAGQNLDFAQYAVAITSTGSNLDKVAQAEGWLATFPMYDWVGGRTSEMSSVGLVPAALQGIDVRAMLEGAKEMDDATRVPEVKNNPAALLALSWYYSGNGKGEKDMVVLPYKDSLLLFSRYLQQLVMESLGKEKDLDGKTVYQGIAVYGNKGSTDQHAYVQQLREGVPNFFATLIEVLEDRNGASPEIDPGVTSGDYLSGFLLGTRQALYENQRDSITVTIPQVNARTVGALIALYERTVGLYASLVNINAYHQPGVEAGKKAAAVILDLQTKVVGLLQKEKTALSLEQIAEKIGAADQVEAIYKILRHLQANQRGVVFQGNLGQPSSLKVSIS.

Residue E322 is the Proton donor of the active site. Catalysis depends on residues H351 and K455.

The protein belongs to the GPI family.

It localises to the cytoplasm. The enzyme catalyses alpha-D-glucose 6-phosphate = beta-D-fructose 6-phosphate. It functions in the pathway carbohydrate biosynthesis; gluconeogenesis. Its pathway is carbohydrate degradation; glycolysis; D-glyceraldehyde 3-phosphate and glycerone phosphate from D-glucose: step 2/4. Catalyzes the reversible isomerization of glucose-6-phosphate to fructose-6-phosphate. In Trichormus variabilis (strain ATCC 29413 / PCC 7937) (Anabaena variabilis), this protein is Glucose-6-phosphate isomerase.